We begin with the raw amino-acid sequence, 154 residues long: Aminoalkylphosphonate N-acetyltransferase (154 aa).

In terms of domain architecture, N-acetyltransferase spans 14–154 (CELRHATTED…QSHFRFTKAL (141 aa)).

Homodimer. The cofactor is a divalent metal cation.

The enzyme catalyses aminomethylphosphonate + acetyl-CoA = 2-N-acetamidomethylphosphonate + CoA. It carries out the reaction (S)-1-aminoethylphosphonate + acetyl-CoA = [(1S)-1-acetamidoethyl]phosphonate + CoA. Aminoalkylphosphonate N-acetyltransferase which is able to acetylate a range of aminoalkylphosphonic acids, including (S)-1-aminoethylphosphonate ((S)-1AEP) and 2-aminoethylphosphonate, using acetyl-CoA as acetyl donor. Its physiological role in S.typhimurium is unclear. However, by acetylating (S)-1AEP, PhnO would protect against the deleterious effects of (S)-1AEP, a structural analog of D-alanine that has antibacterial properties. The protein is Aminoalkylphosphonate N-acetyltransferase of Salmonella typhimurium (strain LT2 / SGSC1412 / ATCC 700720).